We begin with the raw amino-acid sequence, 630 residues long: MALRKELLKSIWYAFTALDVEKSGKVSKSQLKVLSHNLYTVLNIPHDPVALEEHFRDDDDGPVSSQGYMPYLNKYILDKVEEGAFVKEHFDELCWTLTAKKNYRADGIGSSPLSNQDAFRLWCLFNFLSEDKYPLIMVPDEVEYLLKKLLGSLSLEMGLGELEELLAQDAQSAQTAVGLSVWQFLELFNSGRCLRGVGRDSLSMAIQEVYQELIQDVLKQGYLWKRGHLRRNWAERWFQLQPSSLCYFGSEECKEKRGTIPLDAHCCVEVLPDREGKRCMFCVKTASRTYEMSASDTRQRQEWTAAIQTAIRLQAEGKTSLHKDLKQKRREQREQRERRRAAKEEELLRLQQLQEEKERKLQELELLQEAQRQAERLLQEEEERRRSQHKELQQALEGQLREAEQARASMQAEMELKKEEAARQRQRIAELEEMQERLQEALQLEVKARRDEEAVRLAQTRLLEEEEEKLKQLMHLKEEQERYIERAQQEKQELQQEMALQSRSLQHAQQQLEEVRQNRQRADEDVEAAQRKLRQASTNVKHWNVQMNRLMHPIEPGDKRPTTSSSFTGFQPPPLARRDSSLKRLTRWGSQGNRTLSVNSSEQKSLNGGDETPILALASQEEKLDPAPGN.

Tyr-210 carries the phosphotyrosine modification. Residues 216-312 enclose the PH domain; sequence DVLKQGYLWK…WTAAIQTAIR (97 aa). N6-acetyllysine is present on Lys-225. Disordered stretches follow at residues 318-341, 378-418, and 552-630; these read KTSL…RRRA, LQEE…ELKK, and HPIE…APGN. Basic and acidic residues-rich tracts occupy residues 331-341 and 378-392; these read EQREQRERRRA and LQEE…HKEL. A compositionally biased stretch (polar residues) spans 588–606; the sequence is WGSQGNRTLSVNSSEQKSL. At Ser-590 the chain carries Phosphoserine. Residues 620 to 630 are compositionally biased toward basic and acidic residues; that stretch reads QEEKLDPAPGN.

As to quaternary structure, interacts with IRF4, activated RAC1 and F-actin. Both the phosphorylated and non-phosphorylated forms bind phosphatidylinositol 3,4,5-trisphosphate (PtdInsP3). Interacts with ZAP70. Interacts with RAB11A. In terms of processing, tyrosine-phosphorylated by tyrosine-protein kinase LCK in response to T-cell activation. Thymus.

It localises to the cytoplasm. It is found in the cell membrane. The protein localises to the nucleus. Its subcellular location is the cytoskeleton. The protein resides in the perinuclear region. It localises to the cell projection. It is found in the filopodium. Phosphatidylinositol 3,4,5-trisphosphate-dependent guanine nucleotide exchange factor (GEF) which plays a role in the activation of Rho GTPases RAC1, RhoA and CDC42. Can regulate cell morphology in cooperation with activated RAC1. Involved in immune homeostasis by ensuring proper trafficking and availability of T-cell regulator CTLA-4 at T-cell surface. Plays a role in Th2 (T helper cells) development and/or activation, perhaps by interfering with ZAP70 signaling. Required for optimal T-cell effector function, lymphocyte homeostasis and the prevention of systemic autoimmunity. The protein is Differentially expressed in FDCP 6 (Def6) of Mus musculus (Mouse).